A 458-amino-acid polypeptide reads, in one-letter code: uncharacterized protein (458 aa).

Disordered regions lie at residues 339–397 and 434–458; these read GTGY…ARIL and YNSE…EDDC. Composition is skewed to acidic residues over residues 344–390 and 436–458; these read SDSD…EEEP and SEDE…EDDC.

This is an uncharacterized protein from Invertebrate iridescent virus 3 (IIV-3).